Here is a 356-residue protein sequence, read N- to C-terminus: Holliday junction branch migration complex subunit RuvB (356 aa).

The interval 4 to 191 (TDKLATEQRI…FGIVARLEFY (188 aa)) is large ATPase domain (RuvB-L). ATP is bound by residues Leu30, Arg31, Gly72, Lys75, Thr76, Thr77, 138-140 (EDY), Arg181, Tyr191, and Arg228. Thr76 contributes to the Mg(2+) binding site. The segment at 192–262 (DAEQLSRIVR…VADAALAMLD (71 aa)) is small ATPAse domain (RuvB-S). The tract at residues 265-356 (PVGFDLMDRK…RGEWDTPDGK (92 aa)) is head domain (RuvB-H). Residues Arg301, Arg320, and Arg325 each coordinate DNA.

This sequence belongs to the RuvB family. Homohexamer. Forms an RuvA(8)-RuvB(12)-Holliday junction (HJ) complex. HJ DNA is sandwiched between 2 RuvA tetramers; dsDNA enters through RuvA and exits via RuvB. An RuvB hexamer assembles on each DNA strand where it exits the tetramer. Each RuvB hexamer is contacted by two RuvA subunits (via domain III) on 2 adjacent RuvB subunits; this complex drives branch migration. In the full resolvosome a probable DNA-RuvA(4)-RuvB(12)-RuvC(2) complex forms which resolves the HJ.

The protein resides in the cytoplasm. The catalysed reaction is ATP + H2O = ADP + phosphate + H(+). Its function is as follows. The RuvA-RuvB-RuvC complex processes Holliday junction (HJ) DNA during genetic recombination and DNA repair, while the RuvA-RuvB complex plays an important role in the rescue of blocked DNA replication forks via replication fork reversal (RFR). RuvA specifically binds to HJ cruciform DNA, conferring on it an open structure. The RuvB hexamer acts as an ATP-dependent pump, pulling dsDNA into and through the RuvAB complex. RuvB forms 2 homohexamers on either side of HJ DNA bound by 1 or 2 RuvA tetramers; 4 subunits per hexamer contact DNA at a time. Coordinated motions by a converter formed by DNA-disengaged RuvB subunits stimulates ATP hydrolysis and nucleotide exchange. Immobilization of the converter enables RuvB to convert the ATP-contained energy into a lever motion, pulling 2 nucleotides of DNA out of the RuvA tetramer per ATP hydrolyzed, thus driving DNA branch migration. The RuvB motors rotate together with the DNA substrate, which together with the progressing nucleotide cycle form the mechanistic basis for DNA recombination by continuous HJ branch migration. Branch migration allows RuvC to scan DNA until it finds its consensus sequence, where it cleaves and resolves cruciform DNA. This is Holliday junction branch migration complex subunit RuvB from Burkholderia lata (strain ATCC 17760 / DSM 23089 / LMG 22485 / NCIMB 9086 / R18194 / 383).